A 365-amino-acid chain; its full sequence is WAT1-related protein At4g01440 (365 aa).

Helical transmembrane passes span W8–V28, V40–W60, I72–L92, T101–F121, A132–M152, W181–I201, Y213–I233, I249–W269, I277–I297, and I302–L322. 2 consecutive EamA domains span residues N25–I144 and G196–L321.

The protein belongs to the drug/metabolite transporter (DMT) superfamily. Plant drug/metabolite exporter (P-DME) (TC 2.A.7.4) family.

The protein localises to the membrane. The sequence is that of WAT1-related protein At4g01440 from Arabidopsis thaliana (Mouse-ear cress).